Here is a 418-residue protein sequence, read N- to C-terminus: Tyrosine--tRNA ligase (418 aa).

Tyr38 serves as a coordination point for L-tyrosine. A 'HIGH' region motif is present at residues 43-52 (CTARSLHIGS). L-tyrosine-binding residues include Tyr175 and Gln179. The 'KMSKS' region signature appears at 235 to 239 (KMGKT). Residue Lys238 participates in ATP binding. In terms of domain architecture, S4 RNA-binding spans 348 to 413 (LSVVKLLQVS…CGKKRHLKVV (66 aa)).

It belongs to the class-I aminoacyl-tRNA synthetase family. TyrS type 1 subfamily. As to quaternary structure, homodimer.

It is found in the cytoplasm. It catalyses the reaction tRNA(Tyr) + L-tyrosine + ATP = L-tyrosyl-tRNA(Tyr) + AMP + diphosphate + H(+). Its function is as follows. Catalyzes the attachment of tyrosine to tRNA(Tyr) in a two-step reaction: tyrosine is first activated by ATP to form Tyr-AMP and then transferred to the acceptor end of tRNA(Tyr). This chain is Tyrosine--tRNA ligase, found in Ehrlichia ruminantium (strain Gardel).